A 177-amino-acid chain; its full sequence is UPF0340 protein STH78 (177 aa).

The protein belongs to the UPF0340 family.

This is UPF0340 protein STH78 from Symbiobacterium thermophilum (strain DSM 24528 / JCM 14929 / IAM 14863 / T).